Reading from the N-terminus, the 286-residue chain is tRNA uridine(34) hydroxylase (286 aa).

The Rhodanese domain occupies 130–225 (RGDDVVFFDG…YGETFGDRGL (96 aa)). Cys-185 functions as the Cysteine persulfide intermediate in the catalytic mechanism.

Belongs to the TrhO family.

The catalysed reaction is uridine(34) in tRNA + AH2 + O2 = 5-hydroxyuridine(34) in tRNA + A + H2O. Functionally, catalyzes oxygen-dependent 5-hydroxyuridine (ho5U) modification at position 34 in tRNAs. The protein is tRNA uridine(34) hydroxylase of Rhodococcus erythropolis (strain PR4 / NBRC 100887).